The primary structure comprises 480 residues: Aspartyl/glutamyl-tRNA(Asn/Gln) amidotransferase subunit B (480 aa).

It belongs to the GatB/GatE family. GatB subfamily. In terms of assembly, heterotrimer of A, B and C subunits.

It catalyses the reaction L-glutamyl-tRNA(Gln) + L-glutamine + ATP + H2O = L-glutaminyl-tRNA(Gln) + L-glutamate + ADP + phosphate + H(+). The catalysed reaction is L-aspartyl-tRNA(Asn) + L-glutamine + ATP + H2O = L-asparaginyl-tRNA(Asn) + L-glutamate + ADP + phosphate + 2 H(+). Allows the formation of correctly charged Asn-tRNA(Asn) or Gln-tRNA(Gln) through the transamidation of misacylated Asp-tRNA(Asn) or Glu-tRNA(Gln) in organisms which lack either or both of asparaginyl-tRNA or glutaminyl-tRNA synthetases. The reaction takes place in the presence of glutamine and ATP through an activated phospho-Asp-tRNA(Asn) or phospho-Glu-tRNA(Gln). The sequence is that of Aspartyl/glutamyl-tRNA(Asn/Gln) amidotransferase subunit B from Streptococcus pneumoniae (strain 70585).